The sequence spans 157 residues: UPF0303 protein NT01EI_1570 (157 aa).

It belongs to the UPF0303 family.

The sequence is that of UPF0303 protein NT01EI_1570 from Edwardsiella ictaluri (strain 93-146).